A 312-amino-acid chain; its full sequence is Protein phosphatase PTC7 homolog fig (312 aa).

The PPM-type phosphatase domain occupies 42–306; it reads IQGSSKDQLA…DDITVILASV (265 aa). Residues aspartate 83, glycine 84, and aspartate 228 each coordinate Mn(2+).

The protein belongs to the PP2C family. Mg(2+) serves as cofactor. The cofactor is Mn(2+).

The enzyme catalyses O-phospho-L-seryl-[protein] + H2O = L-seryl-[protein] + phosphate. It catalyses the reaction O-phospho-L-threonyl-[protein] + H2O = L-threonyl-[protein] + phosphate. This Drosophila mojavensis (Fruit fly) protein is Protein phosphatase PTC7 homolog fig.